The following is a 105-amino-acid chain: Ig lambda-1 chain C region (105 aa).

Positions 6–100 constitute an Ig-like domain; that stretch reads PSVTLFPPSS…EGHTVEKSLS (95 aa). Cysteines 27 and 86 form a disulfide.

This chain is Ig lambda-1 chain C region, found in Mus musculus (Mouse).